The primary structure comprises 730 residues: PWWP domain-containing protein 2A (730 aa).

Positions 1-15 (MAAVAAEAAATAASP) are enriched in low complexity. A disordered region spans residues 1–134 (MAAVAAEAAA…PPAGGDSAVS (134 aa)). Residues 66-77 (PLPPPPPPPPPG) are compositionally biased toward pro residues. Residues serine 82 and serine 99 each carry the phosphoserine modification. Positions 91 to 108 (PEPAAVPVSPPEQPPAAP) are enriched in pro residues. An interaction with HDAC1 and MTA1 region spans residues 128–346 (GGDSAVSHLI…KLKTDHKVDG (219 aa)). Lysine 188 is covalently cross-linked (Glycyl lysine isopeptide (Lys-Gly) (interchain with G-Cter in SUMO2)). Disordered stretches follow at residues 257–276 (YNQS…KRKM), 311–355 (IRKG…SQRR), and 409–531 (KEKA…LGKK). A compositionally biased stretch (basic residues) spans 267–276 (RKIKRPKRKM). Composition is skewed to basic and acidic residues over residues 311 to 329 (IRKG…RRND) and 341 to 354 (DHKV…ESQR). Residues 396-547 (MDHAKAREVL…SVYLTLNQET (152 aa)) are interaction with the H2A.Z/H2AZ1. Residues 488–501 (SAGEAPSEKPSPSE) are compositionally biased toward low complexity. Over residues 512–527 (DTSRVRVPGEQEELRM) the composition is skewed to basic and acidic residues. One can recognise a PWWP domain in the interval 630-690 (VGDIVWAKIY…LSQLSPFLEN (61 aa)).

Component of a MTA1-specific subcomplex of the NuRD complex (M1HR), which is composed of PWWP2A, MTA1/2, HDAC1/2, and RBBP4/7 but does not contain CHD4 and MBD3. Interacts with MTA1; the interaction mediates the association of PWWP2A with the M1HR complex. Interacts with H2A.Z/H2AZ1. Interacts (via PWWP domain) with histone H3 trimethylated at 'Lys-36' (H3K36me3). Does not interact with CHD4 and MBD3.

The protein localises to the nucleus. Its function is as follows. Chromatin-binding protein that acts as an adapter between distinct nucleosome components (H3K36me3 or H2A.Z) and chromatin-modifying complexes, contributing to the regulation of the levels of histone acetylation at actively transcribed genes. Competes with CHD4 and MBD3 for interaction with MTA1 to form a NuRD subcomplex, preventing the formation of full NuRD complex (containing CHD4 and MBD3), leading to recruitment of HDACs to gene promoters resulting in turn in the deacetylation of nearby H3K27 and H2A.Z. Plays a role in facilitating transcriptional elongation and repression of spurious transcription initiation through regulation of histone acetylation. Essential for proper mitosis progression. In Mus musculus (Mouse), this protein is PWWP domain-containing protein 2A (Pwwp2a).